We begin with the raw amino-acid sequence, 356 residues long: Holliday junction branch migration complex subunit RuvB (356 aa).

The interval 13 to 197 (LPPARRMLSA…FGIVARLEFY (185 aa)) is large ATPase domain (RuvB-L). ATP-binding positions include leucine 36, arginine 37, glycine 78, lysine 81, threonine 82, threonine 83, 144–146 (EDY), arginine 187, tyrosine 197, and arginine 234. Threonine 82 is a Mg(2+) binding site. The small ATPAse domain (RuvB-S) stretch occupies residues 198 to 268 (TPEELARIVK…IANRALAMLD (71 aa)). Residues 271–356 (PQGFDLMDRK…RGNAENLFEE (86 aa)) are head domain (RuvB-H). DNA is bound by residues arginine 326 and arginine 331.

It belongs to the RuvB family. Homohexamer. Forms an RuvA(8)-RuvB(12)-Holliday junction (HJ) complex. HJ DNA is sandwiched between 2 RuvA tetramers; dsDNA enters through RuvA and exits via RuvB. An RuvB hexamer assembles on each DNA strand where it exits the tetramer. Each RuvB hexamer is contacted by two RuvA subunits (via domain III) on 2 adjacent RuvB subunits; this complex drives branch migration. In the full resolvosome a probable DNA-RuvA(4)-RuvB(12)-RuvC(2) complex forms which resolves the HJ.

It is found in the cytoplasm. It catalyses the reaction ATP + H2O = ADP + phosphate + H(+). In terms of biological role, the RuvA-RuvB-RuvC complex processes Holliday junction (HJ) DNA during genetic recombination and DNA repair, while the RuvA-RuvB complex plays an important role in the rescue of blocked DNA replication forks via replication fork reversal (RFR). RuvA specifically binds to HJ cruciform DNA, conferring on it an open structure. The RuvB hexamer acts as an ATP-dependent pump, pulling dsDNA into and through the RuvAB complex. RuvB forms 2 homohexamers on either side of HJ DNA bound by 1 or 2 RuvA tetramers; 4 subunits per hexamer contact DNA at a time. Coordinated motions by a converter formed by DNA-disengaged RuvB subunits stimulates ATP hydrolysis and nucleotide exchange. Immobilization of the converter enables RuvB to convert the ATP-contained energy into a lever motion, pulling 2 nucleotides of DNA out of the RuvA tetramer per ATP hydrolyzed, thus driving DNA branch migration. The RuvB motors rotate together with the DNA substrate, which together with the progressing nucleotide cycle form the mechanistic basis for DNA recombination by continuous HJ branch migration. Branch migration allows RuvC to scan DNA until it finds its consensus sequence, where it cleaves and resolves cruciform DNA. The polypeptide is Holliday junction branch migration complex subunit RuvB (Polaromonas naphthalenivorans (strain CJ2)).